The following is a 163-amino-acid chain: NADH-quinone oxidoreductase subunit I (163 aa).

2 4Fe-4S ferredoxin-type domains span residues 53–83 and 94–123; these read LRRYPNGEERCIACKLCEAICPAQAITIEAG and VRYDIDMVKCIYCGFCQEACPVEAIVEGPN. [4Fe-4S] cluster-binding residues include Cys63, Cys66, Cys69, Cys73, Cys103, Cys106, Cys109, and Cys113.

This sequence belongs to the complex I 23 kDa subunit family. NDH-1 is composed of 14 different subunits. Subunits NuoA, H, J, K, L, M, N constitute the membrane sector of the complex. The cofactor is [4Fe-4S] cluster.

The protein localises to the cell inner membrane. The catalysed reaction is a quinone + NADH + 5 H(+)(in) = a quinol + NAD(+) + 4 H(+)(out). Functionally, NDH-1 shuttles electrons from NADH, via FMN and iron-sulfur (Fe-S) centers, to quinones in the respiratory chain. The immediate electron acceptor for the enzyme in this species is believed to be ubiquinone. Couples the redox reaction to proton translocation (for every two electrons transferred, four hydrogen ions are translocated across the cytoplasmic membrane), and thus conserves the redox energy in a proton gradient. This is NADH-quinone oxidoreductase subunit I from Bartonella tribocorum (strain CIP 105476 / IBS 506).